The sequence spans 354 residues: Protein-glutamate methylesterase/protein-glutamine glutaminase (354 aa).

The 118-residue stretch at 7-124 folds into the Response regulatory domain; the sequence is KVLCVDDSAL…REGMLEYTEM (118 aa). Aspartate 58 carries the post-translational modification 4-aspartylphosphate. Residues 156-348 form the CheB-type methylesterase domain; that stretch reads LLSSEKVIII…AALMKRAEAS (193 aa). Residues serine 168, histidine 194, and aspartate 290 contribute to the active site.

Belongs to the CheB family. Post-translationally, phosphorylated by CheA. Phosphorylation of the N-terminal regulatory domain activates the methylesterase activity.

It localises to the cytoplasm. The catalysed reaction is [protein]-L-glutamate 5-O-methyl ester + H2O = L-glutamyl-[protein] + methanol + H(+). The enzyme catalyses L-glutaminyl-[protein] + H2O = L-glutamyl-[protein] + NH4(+). Functionally, involved in chemotaxis. Part of a chemotaxis signal transduction system that modulates chemotaxis in response to various stimuli. Catalyzes the demethylation of specific methylglutamate residues introduced into the chemoreceptors (methyl-accepting chemotaxis proteins or MCP) by CheR. Also mediates the irreversible deamidation of specific glutamine residues to glutamic acid. The protein is Protein-glutamate methylesterase/protein-glutamine glutaminase of Chromohalobacter salexigens (strain ATCC BAA-138 / DSM 3043 / CIP 106854 / NCIMB 13768 / 1H11).